A 135-amino-acid polypeptide reads, in one-letter code: Small ribosomal subunit protein uS9 (135 aa).

The span at 108–118 (VGDPRRTEPHK) shows a compositional bias: basic and acidic residues. Positions 108–135 (VGDPRRTEPHKPNRSTKGPRAKRQKSYR) are disordered. Positions 119–135 (PNRSTKGPRAKRQKSYR) are enriched in basic residues.

Belongs to the universal ribosomal protein uS9 family.

The polypeptide is Small ribosomal subunit protein uS9 (rps9) (Pyrococcus abyssi (strain GE5 / Orsay)).